The following is a 640-amino-acid chain: MDTNTTSYTPLPGDPFLSGPPETPRRPLKGFAVIFASVIFLMSLVALIIHQGPQQPPDVMPDKQDEHHHPQSTTNTMLSWQRTAFHFQPEKNWMNDPNGPMYYKGWYHFFYQYNPRGAVWGNIVWGHAVSRDLIHWLHLPLAMVADQWYDINGVWTGSATILPNDQIVMLYTGSTNESVQVQCLAYPADHKDPLLTKWVKYSGNPVLVPPPGIGVKDFRDPTTAWYITEGKWRITIGSKVNKTGISLVYDTKDFIKYEQLDGVLHAVPGTGMWECIDFYPVSKTSDKGLDTSQNGADVKHVMKASLDDDRNDYYALGSYNEKTGKWVPDNQKIDVGIGIRYDYGKFYASKTFYDQNKQRRVLWGWIGESDSENADVKKGWASLQGIPRTVLFDQKTGSNLLQWPVEEIEKLRLNKKNFDKVQVKAGSVVPLDVGTATQLDIVAEFQLDQKVVESAAETNEEFSCQTSGGAAKRGALGPFGLLVLADDSLSERTPVYFYVVKGSGGTVNTYFCADQTRSSVATDVVKQVSGSYVPVLKGETLSLRILVDHSIIESFAQGGRTTITTRVYPTQAIYGAARLFLFNNATDTSFTASLQIWQMNSAFIRPFSPDAASHSSFTPVTVFIKFIVPFGIFLTLYFVR.

The tract at residues 1–22 (MDTNTTSYTPLPGDPFLSGPPE) is disordered. Over 1-29 (MDTNTTSYTPLPGDPFLSGPPETPRRPLK) the chain is Cytoplasmic. Residues 1–78 (MDTNTTSYTP…HPQSTTNTML (78 aa)) constitute a propeptide, removed in mature form. The chain crosses the membrane as a helical span at residues 30–49 (GFAVIFASVIFLMSLVALII). Residues 50–616 (HQGPQQPPDV…FSPDAASHSS (567 aa)) lie on the Lumenal side of the membrane. Substrate-binding positions include 93–96 (WMND), Q112, W120, 155–156 (WT), 219–220 (RD), E274, and D307. D96 is a catalytic residue. An intrachain disulfide couples C464 to C512. A helical membrane pass occupies residues 617-639 (FTPVTVFIKFIVPFGIFLTLYFV). A topological domain (cytoplasmic) is located at residue R640.

Belongs to the glycosyl hydrolase 32 family. In terms of tissue distribution, expressed in buds, stems, roots and leaves.

The protein resides in the membrane. It is found in the vacuole membrane. It catalyses the reaction Hydrolysis of terminal non-reducing beta-D-fructofuranoside residues in beta-D-fructofuranosides.. Functionally, vacuolar invertase. The sequence is that of Acid beta-fructofuranosidase 2, vacuolar from Rosa hybrid cultivar.